The chain runs to 441 residues: ATP-dependent protease ATPase subunit HslU (441 aa).

ATP-binding positions include Ile18, 60 to 65 (GVGKTE), Asp254, Glu319, and Arg391.

Belongs to the ClpX chaperone family. HslU subfamily. As to quaternary structure, a double ring-shaped homohexamer of HslV is capped on each side by a ring-shaped HslU homohexamer. The assembly of the HslU/HslV complex is dependent on binding of ATP.

The protein localises to the cytoplasm. Functionally, ATPase subunit of a proteasome-like degradation complex; this subunit has chaperone activity. The binding of ATP and its subsequent hydrolysis by HslU are essential for unfolding of protein substrates subsequently hydrolyzed by HslV. HslU recognizes the N-terminal part of its protein substrates and unfolds these before they are guided to HslV for hydrolysis. In Shewanella loihica (strain ATCC BAA-1088 / PV-4), this protein is ATP-dependent protease ATPase subunit HslU.